The chain runs to 412 residues: Serine hydroxymethyltransferase 1 (412 aa).

Residues leucine 116 and glycine 120–leucine 122 contribute to the (6S)-5,6,7,8-tetrahydrofolate site. At lysine 225 the chain carries N6-(pyridoxal phosphate)lysine.

This sequence belongs to the SHMT family. In terms of assembly, homodimer. Pyridoxal 5'-phosphate is required as a cofactor.

The protein resides in the cytoplasm. The catalysed reaction is (6R)-5,10-methylene-5,6,7,8-tetrahydrofolate + glycine + H2O = (6S)-5,6,7,8-tetrahydrofolate + L-serine. It participates in one-carbon metabolism; tetrahydrofolate interconversion. Its pathway is amino-acid biosynthesis; glycine biosynthesis; glycine from L-serine: step 1/1. Functionally, catalyzes the reversible interconversion of serine and glycine with tetrahydrofolate (THF) serving as the one-carbon carrier. This reaction serves as the major source of one-carbon groups required for the biosynthesis of purines, thymidylate, methionine, and other important biomolecules. Also exhibits THF-independent aldolase activity toward beta-hydroxyamino acids, producing glycine and aldehydes, via a retro-aldol mechanism. The sequence is that of Serine hydroxymethyltransferase 1 from Pseudomonas fluorescens (strain Pf0-1).